A 526-amino-acid chain; its full sequence is Clostripain (526 aa).

The N-terminal stretch at 1–27 is a signal peptide; sequence MLRRKVSTLLMTALITTSFLNSKPVYA. Residues 28–50 constitute a propeptide that is removed on maturation; that stretch reads NPVTKSKDNNLKEVQQVTSKSNK. Positions 182-190 are cleaved as a propeptide — linker; that stretch reads EKSNPRLNR. Cys-231 serves as the catalytic Nucleophile.

The protein belongs to the peptidase C11 family. Heterodimer of a light chain and a heavy chain held together by strong non-covalent forces rather than by intramolecular disulfide bridges.

The enzyme catalyses Preferential cleavage: Arg-|-Xaa, including Arg-|-Pro bond, but not Lys-|-Xaa.. Cysteine endopeptidase with strict specificity. The protein is Clostripain (cloSI) of Hathewaya histolytica (Clostridium histolyticum).